We begin with the raw amino-acid sequence, 212 residues long: LexA repressor (212 aa).

Positions 26-46 (VREIGEAVGLSSTSTVHGHID) form a DNA-binding region, H-T-H motif. Residues Ser-128 and Lys-171 each act as for autocatalytic cleavage activity in the active site.

Belongs to the peptidase S24 family. Homodimer.

It catalyses the reaction Hydrolysis of Ala-|-Gly bond in repressor LexA.. Its function is as follows. Represses a number of genes involved in the response to DNA damage (SOS response), including recA and lexA. In the presence of single-stranded DNA, RecA interacts with LexA causing an autocatalytic cleavage which disrupts the DNA-binding part of LexA, leading to derepression of the SOS regulon and eventually DNA repair. The protein is LexA repressor of Oenococcus oeni (strain ATCC BAA-331 / PSU-1).